The sequence spans 137 residues: Large-conductance mechanosensitive channel (137 aa).

The next 2 membrane-spanning stretches (helical) occupy residues 10–30 (FAMRGNVVDLAVGVIIGAAFG) and 76–96 (GVFIQNVFDFVIVAFAIFVAI).

It belongs to the MscL family. In terms of assembly, homopentamer.

The protein localises to the cell inner membrane. Functionally, channel that opens in response to stretch forces in the membrane lipid bilayer. May participate in the regulation of osmotic pressure changes within the cell. The polypeptide is Large-conductance mechanosensitive channel (Salmonella choleraesuis (strain SC-B67)).